The chain runs to 137 residues: Small ribosomal subunit protein uS12 (137 aa).

D102 is subject to 3-methylthioaspartic acid.

It belongs to the universal ribosomal protein uS12 family. As to quaternary structure, part of the 30S ribosomal subunit. Contacts proteins S8 and S17. May interact with IF1 in the 30S initiation complex.

Its function is as follows. With S4 and S5 plays an important role in translational accuracy. Functionally, interacts with and stabilizes bases of the 16S rRNA that are involved in tRNA selection in the A site and with the mRNA backbone. Located at the interface of the 30S and 50S subunits, it traverses the body of the 30S subunit contacting proteins on the other side and probably holding the rRNA structure together. The combined cluster of proteins S8, S12 and S17 appears to hold together the shoulder and platform of the 30S subunit. In Mesoplasma florum (strain ATCC 33453 / NBRC 100688 / NCTC 11704 / L1) (Acholeplasma florum), this protein is Small ribosomal subunit protein uS12.